The following is a 219-amino-acid chain: Probable nicotinate-nucleotide adenylyltransferase (219 aa).

This sequence belongs to the NadD family.

It carries out the reaction nicotinate beta-D-ribonucleotide + ATP + H(+) = deamido-NAD(+) + diphosphate. It functions in the pathway cofactor biosynthesis; NAD(+) biosynthesis; deamido-NAD(+) from nicotinate D-ribonucleotide: step 1/1. Catalyzes the reversible adenylation of nicotinate mononucleotide (NaMN) to nicotinic acid adenine dinucleotide (NaAD). The polypeptide is Probable nicotinate-nucleotide adenylyltransferase (Pseudoalteromonas atlantica (strain T6c / ATCC BAA-1087)).